Reading from the N-terminus, the 972-residue chain is DNA topoisomerase 1 (972 aa).

Disordered stretches follow at residues 1–210 and 300–416; these read MSGD…VFVK and HEQS…RQKA. Positions 11-31 are enriched in polar residues; sequence IHIQNGGSCEVVQSNGVTTNG. A compositionally biased stretch (basic residues) spans 32–50; sequence HGHHHHHHSSSSSSSKHKS. 3 stretches are compositionally biased toward basic and acidic residues: residues 51 to 65, 72 to 86, and 93 to 103; these read SSKDKHRDREREHKS, SKEHKSSSRDKDRHK, and KHRDKDKERDG. A compositionally biased stretch (low complexity) spans 104 to 114; that stretch reads SSNSHRSGSSS. A compositionally biased stretch (basic residues) spans 125–138; it reads SKHKSSSGHHKRSS. Residues 139 to 151 show a composition bias toward basic and acidic residues; it reads KDKERRDKDKDRG. Residues 173 to 183 show a composition bias toward low complexity; sequence SHKSSSSSSSS. S303 is subject to Phosphoserine. Y304 bears the Phosphotyrosine mark. Residues 316–330 are compositionally biased toward acidic residues; sequence HDDDADEMNDDEEDV. Interaction with DNA stretches follow at residues 648–649, 711–716, and 807–809; these read KY, RAGNEK, and TAK. The Topo IB-type catalytic domain maps to 655–972; it reads SSKLKGEKDH…VHMADENYRF (318 aa). Y930 (O-(3'-phospho-DNA)-tyrosine intermediate) is an active-site residue.

The protein belongs to the type IB topoisomerase family. Interacts with Topors.

The protein resides in the nucleus. Its subcellular location is the cytoplasm. The enzyme catalyses ATP-independent breakage of single-stranded DNA, followed by passage and rejoining.. In terms of biological role, releases the supercoiling and torsional tension of DNA introduced during the DNA replication and transcription by transiently cleaving and rejoining one strand of the DNA duplex. Introduces a single-strand break via transesterification at a target site in duplex DNA. The scissile phosphodiester is attacked by the catalytic tyrosine of the enzyme, resulting in the formation of a DNA-(3'-phosphotyrosyl)-enzyme intermediate and the expulsion of a 5'-OH DNA strand. The free DNA strand then undergoes passage around the unbroken strand thus removing DNA supercoils. Finally, in the religation step, the DNA 5'-OH attacks the covalent intermediate to expel the active-site tyrosine and restore the DNA phosphodiester backbone. This is DNA topoisomerase 1 from Drosophila melanogaster (Fruit fly).